We begin with the raw amino-acid sequence, 232 residues long: U2 small nuclear ribonucleoprotein B'' (232 aa).

Residues Gln10–Thr89 enclose the RRM 1 domain. A disordered region spans residues Asp92–Ile159. A compositionally biased stretch (basic and acidic residues) spans Lys108–Glu123. Over residues Ser127–Glu151 the composition is skewed to polar residues. The RRM 2 domain occupies Asn158–Lys232.

It belongs to the RRM U1 A/B'' family. In terms of assembly, component of the spliceosome where it is associated with snRNP U2.

The protein localises to the nucleus. The protein resides in the cajal body. It localises to the nucleoplasm. Its subcellular location is the cytoplasm. Involved in nuclear pre-mRNA splicing. The polypeptide is U2 small nuclear ribonucleoprotein B'' (Oryza sativa subsp. indica (Rice)).